The chain runs to 456 residues: Enolase (456 aa).

Glutamine 164 serves as a coordination point for (2R)-2-phosphoglycerate. The active-site Proton donor is the glutamate 207. Residues aspartate 244, glutamate 287, and aspartate 314 each coordinate Mg(2+). Residues lysine 339, arginine 368, serine 369, and lysine 390 each coordinate (2R)-2-phosphoglycerate. Lysine 339 acts as the Proton acceptor in catalysis.

The protein belongs to the enolase family. As to quaternary structure, component of the RNA degradosome, a multiprotein complex involved in RNA processing and mRNA degradation. The cofactor is Mg(2+).

It localises to the cytoplasm. The protein resides in the secreted. It is found in the cell surface. It catalyses the reaction (2R)-2-phosphoglycerate = phosphoenolpyruvate + H2O. Its pathway is carbohydrate degradation; glycolysis; pyruvate from D-glyceraldehyde 3-phosphate: step 4/5. Its function is as follows. Catalyzes the reversible conversion of 2-phosphoglycerate (2-PG) into phosphoenolpyruvate (PEP). It is essential for the degradation of carbohydrates via glycolysis. In Francisella tularensis subsp. tularensis (strain FSC 198), this protein is Enolase.